The following is a 277-amino-acid chain: Ribosomal RNA small subunit methyltransferase A (277 aa).

S-adenosyl-L-methionine contacts are provided by Asn18, Leu20, Gly45, Glu66, Asp89, and Asn110.

Belongs to the class I-like SAM-binding methyltransferase superfamily. rRNA adenine N(6)-methyltransferase family. RsmA subfamily.

The protein resides in the cytoplasm. The catalysed reaction is adenosine(1518)/adenosine(1519) in 16S rRNA + 4 S-adenosyl-L-methionine = N(6)-dimethyladenosine(1518)/N(6)-dimethyladenosine(1519) in 16S rRNA + 4 S-adenosyl-L-homocysteine + 4 H(+). Specifically dimethylates two adjacent adenosines (A1518 and A1519) in the loop of a conserved hairpin near the 3'-end of 16S rRNA in the 30S particle. May play a critical role in biogenesis of 30S subunits. This is Ribosomal RNA small subunit methyltransferase A from Cupriavidus taiwanensis (strain DSM 17343 / BCRC 17206 / CCUG 44338 / CIP 107171 / LMG 19424 / R1) (Ralstonia taiwanensis (strain LMG 19424)).